The following is a 529-amino-acid chain: DEP domain-containing protein 1B (529 aa).

The DEP domain maps to 24–108; that stretch reads FRAGMPLRKH…DDGHLYRFPP (85 aa). The region spanning 192–393 is the Rho-GAP domain; it reads ARLQKVLGLD…FLMDNYQEIL (202 aa).

This is DEP domain-containing protein 1B (DEPDC1B) from Gallus gallus (Chicken).